A 160-amino-acid polypeptide reads, in one-letter code: Afimbrial adhesin AFA-III (160 aa).

The N-terminal stretch at 1-21 is a signal peptide; it reads MKKLAIMAAASMVFAVSSAHA. Residues 22–75 are receptor-binding; that stretch reads GFTPSGTTGTTKLTVTEECQVRVGDLTVAKTRGQLTDAAPIGPVTVQALGCNAR.

It belongs to the Dr-adhesin family.

It is found in the fimbrium. Its function is as follows. Hemagglutinins of uropathogenic E.coli mediate adherence to the upper urinary tract. These adhesins bind to the Dr blood group antigen and also agglutinate human erythrocytes in the presence of D-mannose (mannose-resistant hemagglutination (MRHA)). The chain is Afimbrial adhesin AFA-III (afaE3) from Escherichia coli.